The sequence spans 182 residues: Translation initiation factor IF-3 (182 aa).

This sequence belongs to the IF-3 family. In terms of assembly, monomer.

The protein localises to the cytoplasm. Functionally, IF-3 binds to the 30S ribosomal subunit and shifts the equilibrium between 70S ribosomes and their 50S and 30S subunits in favor of the free subunits, thus enhancing the availability of 30S subunits on which protein synthesis initiation begins. The protein is Translation initiation factor IF-3 of Tropheryma whipplei (strain TW08/27) (Whipple's bacillus).